Here is a 430-residue protein sequence, read N- to C-terminus: Enolase (430 aa).

Position 166 (Gln166) interacts with (2R)-2-phosphoglycerate. The active-site Proton donor is Glu208. Positions 245, 288, and 315 each coordinate Mg(2+). Lys340, Arg369, Ser370, and Lys391 together coordinate (2R)-2-phosphoglycerate. Lys340 acts as the Proton acceptor in catalysis.

It belongs to the enolase family. Mg(2+) serves as cofactor.

It is found in the cytoplasm. Its subcellular location is the secreted. The protein resides in the cell surface. It catalyses the reaction (2R)-2-phosphoglycerate = phosphoenolpyruvate + H2O. It participates in carbohydrate degradation; glycolysis; pyruvate from D-glyceraldehyde 3-phosphate: step 4/5. Its function is as follows. Catalyzes the reversible conversion of 2-phosphoglycerate (2-PG) into phosphoenolpyruvate (PEP). It is essential for the degradation of carbohydrates via glycolysis. The polypeptide is Enolase (Clostridium kluyveri (strain NBRC 12016)).